The chain runs to 119 residues: Large ribosomal subunit protein uL22 (119 aa).

It belongs to the universal ribosomal protein uL22 family. In terms of assembly, part of the 50S ribosomal subunit.

Its function is as follows. This protein binds specifically to 23S rRNA; its binding is stimulated by other ribosomal proteins, e.g. L4, L17, and L20. It is important during the early stages of 50S assembly. It makes multiple contacts with different domains of the 23S rRNA in the assembled 50S subunit and ribosome. Functionally, the globular domain of the protein is located near the polypeptide exit tunnel on the outside of the subunit, while an extended beta-hairpin is found that lines the wall of the exit tunnel in the center of the 70S ribosome. In Chlorobium chlorochromatii (strain CaD3), this protein is Large ribosomal subunit protein uL22.